Reading from the N-terminus, the 389-residue chain is Phosphoribosylformylglycinamidine cyclo-ligase, chloroplastic (389 aa).

The transit peptide at 1–58 (MEARILQSSSSCYSSLYAVNRSRFSSVSSPKPFSVSFAQTTRTRTRVLSMSKKDGRTD) directs the protein to the chloroplast. The segment at 46-65 (RVLSMSKKDGRTDKDDDTDS) is disordered.

It belongs to the AIR synthase family.

The protein resides in the plastid. It is found in the chloroplast. It catalyses the reaction 2-formamido-N(1)-(5-O-phospho-beta-D-ribosyl)acetamidine + ATP = 5-amino-1-(5-phospho-beta-D-ribosyl)imidazole + ADP + phosphate + H(+). It participates in purine metabolism; IMP biosynthesis via de novo pathway; 5-amino-1-(5-phospho-D-ribosyl)imidazole from N(2)-formyl-N(1)-(5-phospho-D-ribosyl)glycinamide: step 2/2. This Arabidopsis thaliana (Mouse-ear cress) protein is Phosphoribosylformylglycinamidine cyclo-ligase, chloroplastic (PUR5).